The chain runs to 296 residues: MPELPEVETVKRGLAPAMEGARVTRLELRRRDLRFPFPDALAERVSGRTIVGLGRRAKYLLVDLDDGNTLISHLGMSGSFRIEEGAASAMPGEFHHARSKDEKHDHVVFHLEGGGGPRRVVYNDPRRFGFMDIVGRADLSAHPFFRDLGPEPTGNELGATYLAERFRDKAQPLKSALLDQKNIAGLGNIYVCEALWRSHLSPIRAAGTLVTSGGRPKQQLDLLVASIREVIADAIAAGGSSLRDHIRADGSLGYFQHSFSVYDREGQACGTPGCGGTVARIVQAGRSTFYCAACQK.

Residue P2 is the Schiff-base intermediate with DNA of the active site. The active-site Proton donor is the E3. Catalysis depends on K58, which acts as the Proton donor; for beta-elimination activity. Residues H104, R126, and K169 each contribute to the DNA site. Residues 260-296 (SVYDREGQACGTPGCGGTVARIVQAGRSTFYCAACQK) form an FPG-type zinc finger. The Proton donor; for delta-elimination activity role is filled by R286.

The protein belongs to the FPG family. Monomer. Zn(2+) is required as a cofactor.

The enzyme catalyses Hydrolysis of DNA containing ring-opened 7-methylguanine residues, releasing 2,6-diamino-4-hydroxy-5-(N-methyl)formamidopyrimidine.. It catalyses the reaction 2'-deoxyribonucleotide-(2'-deoxyribose 5'-phosphate)-2'-deoxyribonucleotide-DNA = a 3'-end 2'-deoxyribonucleotide-(2,3-dehydro-2,3-deoxyribose 5'-phosphate)-DNA + a 5'-end 5'-phospho-2'-deoxyribonucleoside-DNA + H(+). Functionally, involved in base excision repair of DNA damaged by oxidation or by mutagenic agents. Acts as a DNA glycosylase that recognizes and removes damaged bases. Has a preference for oxidized purines, such as 7,8-dihydro-8-oxoguanine (8-oxoG). Has AP (apurinic/apyrimidinic) lyase activity and introduces nicks in the DNA strand. Cleaves the DNA backbone by beta-delta elimination to generate a single-strand break at the site of the removed base with both 3'- and 5'-phosphates. The chain is Formamidopyrimidine-DNA glycosylase from Rhizobium etli (strain ATCC 51251 / DSM 11541 / JCM 21823 / NBRC 15573 / CFN 42).